A 71-amino-acid chain; its full sequence is MPVIKLRENEPFDVALRRFKRSCEKAGILAETRKREFFEKPTTVRKRAKAAAVKRHLKKLSRENARRVRLY.

Belongs to the bacterial ribosomal protein bS21 family.

The protein is Small ribosomal subunit protein bS21 of Psychromonas ingrahamii (strain DSM 17664 / CCUG 51855 / 37).